The primary structure comprises 362 residues: Peptide chain release factor 1 (362 aa).

Residue Q237 is modified to N5-methylglutamine.

It belongs to the prokaryotic/mitochondrial release factor family. Post-translationally, methylated by PrmC. Methylation increases the termination efficiency of RF1.

The protein resides in the cytoplasm. Functionally, peptide chain release factor 1 directs the termination of translation in response to the peptide chain termination codons UAG and UAA. The chain is Peptide chain release factor 1 from Vibrio parahaemolyticus serotype O3:K6 (strain RIMD 2210633).